The sequence spans 427 residues: MFVDKVKVYVKGGDGGNGMVAFRREKYVPDGGPAGGDGGKGGSVIFKVDEGLRTLMDFRYQRHFKADRGEHGRPKNQHGKNAEDKIVRVPPGTTVIDEQTGQVLADLTHHGQEAIIAKGGRGGRGNTRFATPANPAPELSENGEPGVERDVILELKVLADAGLVGFPSVGKSTLLSVVSSAKPKIAEYHFTTITPNLGVVRVDDGRSFVLADLPGLIEGAHEGIGLGHQFLRHIERTRVIVHVIDMSALEGRDPYDDYVSINEELKAYNLRLMERPQLIVANKMDMPNAAENLERFKEKLTDDHPIFPISALTRDGLQPLLRAIMDTIETTPEFPIYEETETESRVLYKHDKEQDPFVISRADDGAYVLSGAEIEKLFKMTDFSRDESVRRFSRQLRHMGVDEALRQRGAKDGDLVRLLEFEFEFIE.

Residues 1–158 form the Obg domain; it reads MFVDKVKVYV…RDVILELKVL (158 aa). Positions 118–144 are disordered; it reads KGGRGGRGNTRFATPANPAPELSENGE. One can recognise an OBG-type G domain in the interval 159–329; sequence ADAGLVGFPS…LLRAIMDTIE (171 aa). GTP-binding positions include 165-172, 190-194, 212-215, 282-285, and 310-312; these read GFPSVGKS, FTTIT, DLPG, NKMD, and SAL. Residues Ser-172 and Thr-192 each contribute to the Mg(2+) site. Positions 349–427 constitute an OCT domain; it reads KHDKEQDPFV…LLEFEFEFIE (79 aa).

The protein belongs to the TRAFAC class OBG-HflX-like GTPase superfamily. OBG GTPase family. As to quaternary structure, monomer. The cofactor is Mg(2+).

It is found in the cytoplasm. Its function is as follows. An essential GTPase which binds GTP, GDP and possibly (p)ppGpp with moderate affinity, with high nucleotide exchange rates and a fairly low GTP hydrolysis rate. Plays a role in control of the cell cycle, stress response, ribosome biogenesis and in those bacteria that undergo differentiation, in morphogenesis control. The chain is GTPase Obg from Halalkalibacterium halodurans (strain ATCC BAA-125 / DSM 18197 / FERM 7344 / JCM 9153 / C-125) (Bacillus halodurans).